Reading from the N-terminus, the 170-residue chain is ATP synthase subunit b, chloroplastic (170 aa).

The chain crosses the membrane as a helical span at residues 15–35; the sequence is ILETNVINLAVVVGVVVFFVG.

The protein belongs to the ATPase B chain family. F-type ATPases have 2 components, F(1) - the catalytic core - and F(0) - the membrane proton channel. F(1) has five subunits: alpha(3), beta(3), gamma(1), delta(1), epsilon(1). F(0) has four main subunits: a(1), b(1), b'(1) and c(10-14). The alpha and beta chains form an alternating ring which encloses part of the gamma chain. F(1) is attached to F(0) by a central stalk formed by the gamma and epsilon chains, while a peripheral stalk is formed by the delta, b and b' chains.

The protein localises to the plastid. Its subcellular location is the chloroplast thylakoid membrane. F(1)F(0) ATP synthase produces ATP from ADP in the presence of a proton or sodium gradient. F-type ATPases consist of two structural domains, F(1) containing the extramembraneous catalytic core and F(0) containing the membrane proton channel, linked together by a central stalk and a peripheral stalk. During catalysis, ATP synthesis in the catalytic domain of F(1) is coupled via a rotary mechanism of the central stalk subunits to proton translocation. Functionally, component of the F(0) channel, it forms part of the peripheral stalk, linking F(1) to F(0). In Stigeoclonium helveticum (Green alga), this protein is ATP synthase subunit b, chloroplastic.